A 254-amino-acid polypeptide reads, in one-letter code: Keratin-associated protein 24-1 (254 aa).

6 tandem repeats follow at residues 193–202 (YISNSCQPQS), 203–212 (YLVRNYHYSS), 213–222 (YRPTSCRPLS), 223–232 (YLSRSFRSLS), 233–242 (YIPSTFPPLR), and 243–252 (YLCSGSRPLK). Residues 193 to 252 (YISNSCQPQSYLVRNYHYSSYRPTSCRPLSYLSRSFRSLSYIPSTFPPLRYLCSGSRPLK) are 6 X 10 AA repeats of Y-[ILR]-[SVPC]-[NRTS]-[SNTG]-X-[QHRP]-[PSY]-[QSL]-[SRK].

Belongs to the PMG family. As to quaternary structure, interacts with hair keratins. Specific expression in the middle/upper hair cuticle.

In terms of biological role, in the hair cortex, hair keratin intermediate filaments are embedded in an interfilamentous matrix, consisting of hair keratin-associated proteins (KRTAP), which are essential for the formation of a rigid and resistant hair shaft through their extensive disulfide bond cross-linking with abundant cysteine residues of hair keratins. The matrix proteins include the high-sulfur and high-glycine-tyrosine keratins. This chain is Keratin-associated protein 24-1 (KRTAP24-1), found in Homo sapiens (Human).